Consider the following 201-residue polypeptide: Small ribosomal subunit protein uS4c (201 aa).

Residues 89–150 (MRLDNILFRL…KQRSKVLIQN (62 aa)) enclose the S4 RNA-binding domain.

The protein belongs to the universal ribosomal protein uS4 family. In terms of assembly, part of the 30S ribosomal subunit. Contacts protein S5. The interaction surface between S4 and S5 is involved in control of translational fidelity.

Its subcellular location is the plastid. It localises to the chloroplast. One of the primary rRNA binding proteins, it binds directly to 16S rRNA where it nucleates assembly of the body of the 30S subunit. In terms of biological role, with S5 and S12 plays an important role in translational accuracy. The polypeptide is Small ribosomal subunit protein uS4c (rps4) (Dioscorea elephantipes (Elephant's foot yam)).